A 126-amino-acid chain; its full sequence is Aspartate 1-decarboxylase (126 aa).

S25 functions as the Schiff-base intermediate with substrate; via pyruvic acid in the catalytic mechanism. The residue at position 25 (S25) is a Pyruvic acid (Ser). T57 contacts substrate. The active-site Proton donor is the Y58. Position 73–75 (73–75) interacts with substrate; it reads GAA.

This sequence belongs to the PanD family. Heterooctamer of four alpha and four beta subunits. The cofactor is pyruvate. Is synthesized initially as an inactive proenzyme, which is activated by self-cleavage at a specific serine bond to produce a beta-subunit with a hydroxyl group at its C-terminus and an alpha-subunit with a pyruvoyl group at its N-terminus.

Its subcellular location is the cytoplasm. The enzyme catalyses L-aspartate + H(+) = beta-alanine + CO2. It participates in cofactor biosynthesis; (R)-pantothenate biosynthesis; beta-alanine from L-aspartate: step 1/1. In terms of biological role, catalyzes the pyruvoyl-dependent decarboxylation of aspartate to produce beta-alanine. The polypeptide is Aspartate 1-decarboxylase (Methylobacillus flagellatus (strain ATCC 51484 / DSM 6875 / VKM B-1610 / KT)).